The chain runs to 499 residues: Protein adenylyltransferase Fic (499 aa).

The helical transmembrane segment at 38–58 (FHYFVIFASGSLFSGLMFGLL) threads the bilayer. TPR repeat units follow at residues 126-159 (ALSS…SPKH) and 160-194 (PEIL…NPSH). The short motif at 251 to 256 (SVGIEG) is the Inhibitory (S/T)XXXE(G/N) motif element. ATP contacts are provided by residues Glu255 and 337–340 (VGGH). A Fido domain is found at 306–441 (ITLKDILEIH…IRPFVRFIAD (136 aa)). The active site involves His384. Residues 388 to 395 (DGNGRTSR), 420 to 421 (YY), and Asn428 contribute to the ATP site.

Belongs to the fic family. As to quaternary structure, homodimer.

The protein resides in the membrane. It carries out the reaction L-tyrosyl-[protein] + ATP = O-(5'-adenylyl)-L-tyrosyl-[protein] + diphosphate. The catalysed reaction is L-threonyl-[protein] + ATP = 3-O-(5'-adenylyl)-L-threonyl-[protein] + diphosphate. It catalyses the reaction 3-O-(5'-adenylyl)-L-threonyl-[protein] + H2O = L-threonyl-[protein] + AMP + H(+). With respect to regulation, the side chain of Glu-255 determines which of the two opposing activities (AMPylase or de-AMPylase) will take place. In response to endoplasmic reticulum stress, mediates de-AMPylase activity. Adenylyltransferase activity is inhibited by the inhibitory helix present at the N-terminus: Glu-255 binds ATP and competes with ATP-binding at Arg-395, thereby preventing adenylyltransferase activity. In unstressed cells, disengagement of Glu-255 promotes adenylyltransferase activity. Activation dissociates ATP-binding from Glu-255, allowing ordered binding of the entire ATP moiety with the alpha-phosphate in an orientation that is productive for accepting an incoming target hydroxyl side chain. Protein that can both mediate the addition of adenosine 5'-monophosphate (AMP) to specific residues of target proteins (AMPylation), and the removal of the same modification from target proteins (de-AMPylation), depending on the context. The side chain of Glu-255 determines which of the two opposing activities (AMPylase or de-AMPylase) will take place. Acts as a key regulator of the unfolded protein response (UPR) by mediating AMPylation or de-AMPylation of Hsc70-3/BiP. In unstressed cells, acts as an adenylyltransferase by mediating AMPylation of Hsc70-3/BiP at 'Thr-518', thereby inactivating it. In response to endoplasmic reticulum stress, acts as a phosphodiesterase by mediating removal of ATP (de-AMPylation) from Hsc70-3/BiP at 'Thr-518', leading to restore HSPA5/BiP activity. The sequence is that of Protein adenylyltransferase Fic from Aedes aegypti (Yellowfever mosquito).